A 278-amino-acid chain; its full sequence is Coiled-coil domain-containing protein 106 (278 aa).

The stretch at 61–99 (AQLHLALERNSWLQKRIEDLEEERDFLRCQLDKFISSAR) forms a coiled coil. The segment covering 102–119 (ADDHCRGKPGPRRAEGDG) has biased composition (basic and acidic residues). Positions 102–174 (ADDHCRGKPG…KPKARERQRV (73 aa)) are disordered. Phosphoserine is present on Ser128. Residues 131 to 144 (ESAASSLSGASEEG) are compositionally biased toward low complexity. Over residues 150–166 (KRQKQKGGPGRRRFGKP) the composition is skewed to basic residues. A Bipartite nuclear localization signal motif is present at residues 151-164 (RQKQKGGPGRRRFG).

As to quaternary structure, interacts with p53/TP53.

The protein localises to the nucleus. Functionally, promotes the degradation of p53/TP53 protein and inhibits its transactivity. In Bos taurus (Bovine), this protein is Coiled-coil domain-containing protein 106 (CCDC106).